The sequence spans 297 residues: Halorhodopsin (297 aa).

A disordered region spans residues 1-31; that stretch reads MRSRTYHDQSVCGPYGSQRTDCDRDTDAGSD. Topologically, residues 1–45 are extracellular; sequence MRSRTYHDQSVCGPYGSQRTDCDRDTDAGSDTDVHGAQVATQIRT. A helical membrane pass occupies residues 46-71; it reads DTLLHSSLWVNIALAGLSILVFLYMA. Residues 72 to 77 are Cytoplasmic-facing; that stretch reads RTVRAN. A helical transmembrane segment spans residues 78–101; sequence RARLIVGATLMIPLVSLSSYLGLV. The Extracellular portion of the chain corresponds to 102–125; that stretch reads TGLTAGPIEMPAAHALAGEDVLSQ. Residues 126 to 147 traverse the membrane as a helical segment; the sequence is WGRYLTWTLSTPMILLALGWLA. Over 148–150 the chain is Cytoplasmic; sequence EVD. The helical transmembrane segment at 151–174 threads the bilayer; that stretch reads TADLFVVIAADIGMCLTGLAAALT. At 175–177 the chain is on the extracellular side; that stretch reads TSS. The helical transmembrane segment at 178 to 200 threads the bilayer; sequence YAFRWAFYLVSTAFFVVVLYALL. Residues 201–212 are Cytoplasmic-facing; sequence AKWPTNAEAAGT. Residues 213–236 form a helical membrane-spanning segment; that stretch reads GDIFGTLRWLTVILWLGYPILWAL. Topologically, residues 237-246 are extracellular; that stretch reads GVEGFALVDS. Residues 247 to 275 traverse the membrane as a helical segment; sequence VGLTSWGYSLLDIGAKYLFAALLLRWVAN. Position 262 is an N6-(retinylidene)lysine (K262). Residues 276–297 are Cytoplasmic-facing; the sequence is NERTIAVGQRSGRGAIGDPVED.

It belongs to the archaeal/bacterial/fungal opsin family.

Its subcellular location is the cell membrane. Functionally, light-driven chloride pump. This chain is Halorhodopsin (hop), found in Haloterrigena sp. (strain arg-4).